The chain runs to 473 residues: H(+)/Cl(-) exchange transporter ClcA (473 aa).

Topologically, residues 1 to 32 (MKTDTPSLETPQAARLRRRQLIRQLLERDKTP) are cytoplasmic. The chain crosses the membrane as a helical span at residues 33–69 (LAILFMAAVVGTLVGLAAVAFDKGVAWLQNQRMGALV). The Periplasmic portion of the chain corresponds to 70-76 (HTADNYP). Residues 77 to 100 (LLLTVAFLCSAVLAMFGYFLVRKY) form a helical membrane-spanning segment. The short motif at 106–110 (GSGIP) is the Selectivity filter part_1 element. Chloride is bound at residue Ser107. An intramembrane region (helical) is located at residues 109–116 (IPEIEGAL). Over 117–123 (EDQRPVR) the chain is Cytoplasmic. The next 2 helical transmembrane spans lie at 124–141 (WWRV…TLGG) and 148–166 (EGPT…LDIF). The Selectivity filter part_2 signature appears at 146–150 (GREGP). Residues 167 to 176 (RLKGDEARHT) lie on the Cytoplasmic side of the membrane. 2 intramembrane regions (helical) span residues 177 to 189 (LLAT…LAAA) and 193 to 201 (PLAGILFII). Over 202 to 214 (EEMRPQFRYTLIS) the chain is Cytoplasmic. Residues 215 to 232 (IKAVFIGVIMSTIMYRIF) form a helical membrane-spanning segment. Topologically, residues 233–252 (NHEVALIDVGKLSDAPLNTL) are periplasmic. A helical transmembrane segment spans residues 253-281 (WLYLILGIIFGIFGPIFNKWVLGMQDLLH). Over 282 to 287 (RVHGGN) the chain is Cytoplasmic. A helical transmembrane segment spans residues 288-309 (ITKWVLMGGAIGGLCGLLGFVA). The Periplasmic portion of the chain corresponds to 310–329 (PATSGGGFNLIPIATAGNFS). 2 helical membrane-spanning segments follow: residues 330-349 (MGML…LCFS) and 355-376 (GIFA…MVAV). A Selectivity filter part_3 motif is present at residues 355-359 (GIFAP). Residues Ile356 and Phe357 each coordinate chloride. Topologically, residues 377–386 (ELFPQYHLEA) are periplasmic. The helical intramembrane region spans 387-401 (GTFAIAGMGALLAAS). Residues 402–404 (IRA) constitute an intramembrane region (note=Loop between two helices). An intramembrane region (helical) is located at residues 405-416 (PLTGIILVLEMT). The segment at residues 417-421 (DNYQL) is an intramembrane region (note=Loop between two helices). A helical membrane pass occupies residues 422–438 (ILPMIITGLGATLLAQF). The Cytoplasmic portion of the chain corresponds to 439 to 473 (TGGKPLYSAILARTLAKQEAEQLARSKAASASENT). Tyr445 lines the chloride pocket.

The protein belongs to the chloride channel (TC 2.A.49) family. ClcA subfamily. As to quaternary structure, homodimer.

Its subcellular location is the cell inner membrane. It carries out the reaction 2 chloride(in) + H(+)(out) = 2 chloride(out) + H(+)(in). Proton-coupled chloride transporter. Functions as antiport system and exchanges two chloride ions for 1 proton. Probably acts as an electrical shunt for an outwardly-directed proton pump that is linked to amino acid decarboxylation, as part of the extreme acid resistance (XAR) response. This Escherichia coli O139:H28 (strain E24377A / ETEC) protein is H(+)/Cl(-) exchange transporter ClcA.